The chain runs to 698 residues: 4-hydroxybutyrate--CoA ligase [ADP-forming] (698 aa).

In terms of domain architecture, ATP-grasp spans 491–544; the sequence is QEVLKAYGLPLPKSTLAKNEAEAVKAAKKIGYPVVMKIASPQIIHKSDAGGVKV. 517 to 544 is a binding site for ATP; the sequence is AKKIGYPVVMKIASPQIIHKSDAGGVKV.

This sequence in the N-terminal section; belongs to the acetate CoA ligase alpha subunit family. In the C-terminal section; belongs to the acetate CoA ligase beta subunit family. Mg(2+) serves as cofactor. The cofactor is Mn(2+).

The enzyme catalyses 4-hydroxybutanoate + ATP + CoA = 4-hydroxybutanoyl-CoA + ADP + phosphate. Involved in thaumarchaeal hydroxypropionate/hydroxybutyrate (HP/HB) cycle, a modified version of the autotrophic HP/HB cycle of Crenarchaeota. Catalyzes the formation of 4-hydroxybutyryl-CoA, ADP and phosphate from 4-hydroxybutyrate, coenzyme A (CoA) and ATP. Can also use acetate, propionate and butyrate, with poor catalytic efficiency. This Nitrosopumilus maritimus (strain SCM1) protein is 4-hydroxybutyrate--CoA ligase [ADP-forming].